Reading from the N-terminus, the 232-residue chain is 2,3-bisphosphoglycerate-dependent phosphoglycerate mutase (232 aa).

Substrate-binding positions include 10-17 (RHGESQWN), 23-24 (TG), R62, 89-92 (ERHY), K100, 116-117 (RR), and 185-186 (GN). H11 acts as the Tele-phosphohistidine intermediate in catalysis. E89 serves as the catalytic Proton donor/acceptor.

It belongs to the phosphoglycerate mutase family. BPG-dependent PGAM subfamily. Homodimer.

The catalysed reaction is (2R)-2-phosphoglycerate = (2R)-3-phosphoglycerate. It participates in carbohydrate degradation; glycolysis; pyruvate from D-glyceraldehyde 3-phosphate: step 3/5. Functionally, catalyzes the interconversion of 2-phosphoglycerate and 3-phosphoglycerate. This chain is 2,3-bisphosphoglycerate-dependent phosphoglycerate mutase, found in Blochmanniella floridana.